Here is a 200-residue protein sequence, read N- to C-terminus: Adenylyl-sulfate kinase (200 aa).

An ATP-binding site is contributed by Gly-36–Ser-43. The Phosphoserine intermediate role is filled by Ser-110.

It belongs to the APS kinase family.

It catalyses the reaction adenosine 5'-phosphosulfate + ATP = 3'-phosphoadenylyl sulfate + ADP + H(+). The protein operates within sulfur metabolism; hydrogen sulfide biosynthesis; sulfite from sulfate: step 2/3. In terms of biological role, catalyzes the synthesis of activated sulfate. This Clostridium acetobutylicum (strain ATCC 824 / DSM 792 / JCM 1419 / IAM 19013 / LMG 5710 / NBRC 13948 / NRRL B-527 / VKM B-1787 / 2291 / W) protein is Adenylyl-sulfate kinase.